A 255-amino-acid polypeptide reads, in one-letter code: ParA family protein TC_0871 (255 aa).

This sequence belongs to the ParA family.

The chain is ParA family protein TC_0871 from Chlamydia muridarum (strain MoPn / Nigg).